Consider the following 116-residue polypeptide: Cysteine proteinase inhibitor 1 (116 aa).

Residues Met1 to Gly22 form the signal peptide. The 60-residue stretch at Gly30 to Gly89 folds into the Cystatin domain. A Secondary area of contact motif is present at residues Gln73–Gly77. N-linked (GlcNAc...) asparagine glycosylation is present at Asn109.

Belongs to the cystatin family. Phytocystatin subfamily.

The protein resides in the secreted. Specific inhibitor of papain family cysteine proteinases. The protein is Cysteine proteinase inhibitor 1 of Actinidia chinensis var. chinensis (Chinese soft-hair kiwi).